Here is a 274-residue protein sequence, read N- to C-terminus: Phosphatidylglycerol--prolipoprotein diacylglyceryl transferase (274 aa).

Transmembrane regions (helical) follow at residues 22–42, 61–81, 96–116, 125–145, 177–197, 204–224, and 238–258; these read LSVR…MWLA, LLFY…VLFY, IWTG…AMVW, FFTV…VGRI, SQLY…NLFW, GAIS…VEFV, and ISMG…MIWV. Arg-144 contacts a 1,2-diacyl-sn-glycero-3-phospho-(1'-sn-glycerol).

Belongs to the Lgt family.

Its subcellular location is the cell inner membrane. The catalysed reaction is L-cysteinyl-[prolipoprotein] + a 1,2-diacyl-sn-glycero-3-phospho-(1'-sn-glycerol) = an S-1,2-diacyl-sn-glyceryl-L-cysteinyl-[prolipoprotein] + sn-glycerol 1-phosphate + H(+). It participates in protein modification; lipoprotein biosynthesis (diacylglyceryl transfer). Functionally, catalyzes the transfer of the diacylglyceryl group from phosphatidylglycerol to the sulfhydryl group of the N-terminal cysteine of a prolipoprotein, the first step in the formation of mature lipoproteins. The polypeptide is Phosphatidylglycerol--prolipoprotein diacylglyceryl transferase (Aeromonas hydrophila subsp. hydrophila (strain ATCC 7966 / DSM 30187 / BCRC 13018 / CCUG 14551 / JCM 1027 / KCTC 2358 / NCIMB 9240 / NCTC 8049)).